The chain runs to 87 residues: CRISPR-associated endoribonuclease Cas2 (87 aa).

Position 8 (aspartate 8) interacts with Mg(2+).

This sequence belongs to the CRISPR-associated endoribonuclease Cas2 protein family. As to quaternary structure, homodimer, forms a heterotetramer with a Cas1 homodimer. Mg(2+) is required as a cofactor.

Functionally, CRISPR (clustered regularly interspaced short palindromic repeat), is an adaptive immune system that provides protection against mobile genetic elements (viruses, transposable elements and conjugative plasmids). CRISPR clusters contain sequences complementary to antecedent mobile elements and target invading nucleic acids. CRISPR clusters are transcribed and processed into CRISPR RNA (crRNA). Functions as a ssRNA-specific endoribonuclease. Involved in the integration of spacer DNA into the CRISPR cassette. This is CRISPR-associated endoribonuclease Cas2 from Methanosarcina acetivorans (strain ATCC 35395 / DSM 2834 / JCM 12185 / C2A).